The following is a 188-amino-acid chain: Chitin synthase 1 (188 aa).

Belongs to the chitin synthase family. Class I subfamily.

Its subcellular location is the cell membrane. The enzyme catalyses [(1-&gt;4)-N-acetyl-beta-D-glucosaminyl](n) + UDP-N-acetyl-alpha-D-glucosamine = [(1-&gt;4)-N-acetyl-beta-D-glucosaminyl](n+1) + UDP + H(+). Its function is as follows. Polymerizes chitin, a structural polymer of the cell wall and septum, by transferring the sugar moiety of UDP-GlcNAc to the non-reducing end of the growing chitin polymer. The chain is Chitin synthase 1 (CHS1) from Ajellomyces dermatitidis (Blastomyces dermatitidis).